A 364-amino-acid chain; its full sequence is tRNA 2-selenouridine synthase (364 aa).

Residues 14–137 (LLADTPLIDV…LRQTAIQATW (124 aa)) form the Rhodanese domain. The active-site S-selanylcysteine intermediate is the C97.

This sequence belongs to the SelU family. In terms of assembly, monomer.

It carries out the reaction 5-methylaminomethyl-2-thiouridine(34) in tRNA + selenophosphate + (2E)-geranyl diphosphate + H2O + H(+) = 5-methylaminomethyl-2-selenouridine(34) in tRNA + (2E)-thiogeraniol + phosphate + diphosphate. The catalysed reaction is 5-methylaminomethyl-2-thiouridine(34) in tRNA + (2E)-geranyl diphosphate = 5-methylaminomethyl-S-(2E)-geranyl-thiouridine(34) in tRNA + diphosphate. The enzyme catalyses 5-methylaminomethyl-S-(2E)-geranyl-thiouridine(34) in tRNA + selenophosphate + H(+) = 5-methylaminomethyl-2-(Se-phospho)selenouridine(34) in tRNA + (2E)-thiogeraniol. It catalyses the reaction 5-methylaminomethyl-2-(Se-phospho)selenouridine(34) in tRNA + H2O = 5-methylaminomethyl-2-selenouridine(34) in tRNA + phosphate. Functionally, involved in the post-transcriptional modification of the uridine at the wobble position (U34) of tRNA(Lys), tRNA(Glu) and tRNA(Gln). Catalyzes the conversion of 2-thiouridine (S2U-RNA) to 2-selenouridine (Se2U-RNA). Acts in a two-step process involving geranylation of 2-thiouridine (S2U) to S-geranyl-2-thiouridine (geS2U) and subsequent selenation of the latter derivative to 2-selenouridine (Se2U) in the tRNA chain. This Salmonella dublin (strain CT_02021853) protein is tRNA 2-selenouridine synthase.